We begin with the raw amino-acid sequence, 1058 residues long: Probable plasma membrane ATPase (1058 aa).

Residues 1–29 are compositionally biased toward polar residues; the sequence is MDNNQIPKNSPESSAINSAESSPKSNVSS. A disordered region spans residues 1–123; that stretch reads MDNNQIPKNS…SSSGKKEEDY (123 aa). Residues 1 to 212 lie on the Cytoplasmic side of the membrane; sequence MDNNQIPKNS…DVKRYPILEF (212 aa). Positions 31–40 are enriched in basic and acidic residues; that stretch reads VLHENHHKEQ. A compositionally biased stretch (low complexity) spans 41 to 66; the sequence is QQLQQQLQQEQQQQQLPTTPQSEPTQ. Polar residues predominate over residues 96–111; the sequence is SLKTISGYPSSKNTEA. Residues 213-232 form a helical membrane-spanning segment; that stretch reads LYFMWNPLSWTMEVAAIVSI. Residues 233-237 lie on the Extracellular side of the membrane; sequence ALLDW. The chain crosses the membrane as a helical span at residues 238–258; that stretch reads VDFILICALLLLNATIGFIEE. The Cytoplasmic portion of the chain corresponds to 259 to 387; it reads NTAGNAVEAL…GHLQVILRNI (129 aa). The chain crosses the membrane as a helical span at residues 388-407; sequence GLFCISFIAIWVLVELLVDF. Topologically, residues 408-425 are extracellular; that stretch reads LGYDGYCHGVGGGRCLPL. The helical transmembrane segment at 426-447 threads the bilayer; that stretch reads NNALVLLVGGIPIAMPTVLSVT. The Cytoplasmic segment spans residues 448 to 783; that stretch reads MAIGATQLSK…SSRKIFQRMR (336 aa). Asp-480 functions as the 4-aspartylphosphate intermediate in the catalytic mechanism. The Mg(2+) site is built by Asp-728 and Asp-732. Residues 784–805 form a helical membrane-spanning segment; sequence NYVIYSVAATVRICTTFGILTV. Residues 806-810 lie on the Extracellular side of the membrane; it reads AWNFK. The helical transmembrane segment at 811-833 threads the bilayer; sequence FPTIATVIIAILNDGTMLTISKD. Residues 834-849 are Cytoplasmic-facing; sequence RVRARNEPDQWNLFEV. The helical transmembrane segment at 850 to 870 threads the bilayer; the sequence is FTMALCYGFYLVGSTIVFFAI. The Extracellular portion of the chain corresponds to 871 to 889; the sequence is IHDGTWFHDAINLRILTDN. A helical membrane pass occupies residues 890–910; sequence ELRGLIYLQVSISGLATIFVS. Residues 911 to 922 lie on the Cytoplasmic side of the membrane; the sequence is RSQGFSYFERPG. The helical transmembrane segment at 923 to 943 threads the bilayer; that stretch reads NLVIFAFVMSQIVATFIGVYG. The Extracellular portion of the chain corresponds to 944–967; sequence FRGYPHDSFSDNPDYPVHGTNFQG. A helical transmembrane segment spans residues 968-988; that stretch reads CGWGWAVCAWIWCFLWYIPMD. Residues 989 to 1058 are Cytoplasmic-facing; that stretch reads FIKLGVTYIL…HKSVVTDNKV (70 aa).

The protein belongs to the cation transport ATPase (P-type) (TC 3.A.3) family. Type IIIA subfamily.

Its subcellular location is the cell membrane. The catalysed reaction is ATP + H2O + H(+)(in) = ADP + phosphate + 2 H(+)(out). Acid pH levels increase its ATPase activity. Its function is as follows. P-type plasma membrane H+-ATPase (proton pump). The proton gradient it generates drives the active transport of nutrients by H(+) symport. The resulting external acidification and/or internal alkinization may mediate growth responses. The protein is Probable plasma membrane ATPase (patB) of Dictyostelium discoideum (Social amoeba).